The following is a 225-amino-acid chain: GTP:AMP phosphotransferase, mitochondrial (225 aa).

GTP is bound at residue 24–29; sequence GSGKGT. Residues 45 to 74 are NMP; that stretch reads SSGDILRQEIKSESTLGREATTYIAQGKLL. Residues S46, R51, 72 to 74, 103 to 106, and Q110 each bind AMP; these read KLL and GFPR. Positions 144–181 are LID; it reads NRYVHVPSGRVYNLQYNPPKVPGLDDITGEPLTKRLDD. GTP is bound by residues R145 and 154 to 155; that span reads VY. AMP is bound by residues R178 and R189. Residue S218 participates in GTP binding.

It belongs to the adenylate kinase family. AK3 subfamily. Monomer.

The protein resides in the mitochondrion matrix. The enzyme catalyses a ribonucleoside 5'-triphosphate + AMP = a ribonucleoside 5'-diphosphate + ADP. Functionally, involved in maintaining the homeostasis of cellular nucleotides by catalyzing the interconversion of nucleoside phosphates. Has GTP:AMP phosphotransferase and ITP:AMP phosphotransferase activities. Does not accept ATP as phosphate donor. The sequence is that of GTP:AMP phosphotransferase, mitochondrial from Saccharomyces cerevisiae (strain ATCC 204508 / S288c) (Baker's yeast).